The sequence spans 89 residues: Small ribosomal subunit protein uS14 (89 aa).

This sequence belongs to the universal ribosomal protein uS14 family. As to quaternary structure, part of the 30S ribosomal subunit. Contacts proteins S3 and S10.

Binds 16S rRNA, required for the assembly of 30S particles and may also be responsible for determining the conformation of the 16S rRNA at the A site. The protein is Small ribosomal subunit protein uS14 of Chlorobium luteolum (strain DSM 273 / BCRC 81028 / 2530) (Pelodictyon luteolum).